The sequence spans 444 residues: Argininosuccinate synthase (444 aa).

ATP contacts are provided by residues 18-26 (AFSGGLDTS) and Ala44. Residue Tyr100 participates in L-citrulline binding. ATP is bound by residues Gly130 and Thr132. L-aspartate is bound by residues Thr132, Asn136, and Asp137. Asn136 serves as a coordination point for L-citrulline. An ATP-binding site is contributed by Asp137. Residues Arg140 and Ser193 each coordinate L-citrulline. Position 195 (Asp195) interacts with ATP. 3 residues coordinate L-citrulline: Thr202, Glu204, and Glu281.

This sequence belongs to the argininosuccinate synthase family. Type 2 subfamily. Homotetramer.

It localises to the cytoplasm. It carries out the reaction L-citrulline + L-aspartate + ATP = 2-(N(omega)-L-arginino)succinate + AMP + diphosphate + H(+). It functions in the pathway amino-acid biosynthesis; L-arginine biosynthesis; L-arginine from L-ornithine and carbamoyl phosphate: step 2/3. The polypeptide is Argininosuccinate synthase (Haemophilus influenzae (strain PittEE)).